We begin with the raw amino-acid sequence, 1272 residues long: Ubiquitin carboxyl-terminal hydrolase 2 (1272 aa).

The USP domain occupies 736 to 1258 (TGINNIGNTC…TPYFLVYVKQ (523 aa)). The active-site Nucleophile is Cys745. The tract at residues 884–918 (DGLNGDVGTDANRKKNESNDAEVSENEDTTGLTSP) is disordered. Over residues 902 to 911 (NDAEVSENED) the composition is skewed to acidic residues. Phosphoserine is present on Ser907. His1209 acts as the Proton acceptor in catalysis.

It belongs to the peptidase C19 family. As to quaternary structure, forms a ternary complex with RSP5 and RUP1. Interacts with RSP5. Interacts with FZO1.

It catalyses the reaction Thiol-dependent hydrolysis of ester, thioester, amide, peptide and isopeptide bonds formed by the C-terminal Gly of ubiquitin (a 76-residue protein attached to proteins as an intracellular targeting signal).. In terms of biological role, has an ATP-independent isopeptidase activity, cleaving at the C-terminus of the ubiquitin moiety in natural or engineered linear fusion proteins, irrespective of their size or the presence of an N-terminal extension to ubiquitin. Hydrolyzes polyubiquitinated 'Lys-63' polyubiquitin chains in RPO21, producing mono-ubiquitinated RNA polymerase II. Removes ubiquitin chains that initiate proteolysis of FZO1 and inhibit mitochondrial fusion. The chain is Ubiquitin carboxyl-terminal hydrolase 2 (UBP2) from Saccharomyces cerevisiae (strain ATCC 204508 / S288c) (Baker's yeast).